The sequence spans 1007 residues: Protocadherin alpha-C2 (1007 aa).

The N-terminal stretch at 1 to 42 (MEQAGTRPAATEHPRLRRPMPWLLLLPLLLLLLLLLPGPAAS) is a signal peptide. Cadherin domains lie at 43-148 (QLRY…SPRF), 149-257 (PRPN…SPAF), 258-365 (DQST…APEV), 374-469 (VPEN…PPSF), and 470-579 (LEDS…APHI). Residues 43–708 (QLRYSVPEEQ…RTYSEITLYL (666 aa)) lie on the Extracellular side of the membrane. N280 and N436 each carry an N-linked (GlcNAc...) asparagine glycan. 2 N-linked (GlcNAc...) asparagine glycosylation sites follow: N586 and N657. The Cadherin 6 domain maps to 594-691 (GPRTAPAGYL…DRVSKILPDT (98 aa)). A helical membrane pass occupies residues 709-729 (IIALSTVSFIFLLTIIILSII). The Cytoplasmic portion of the chain corresponds to 730–1007 (KCYRYTAYGT…GNSTTDNSDQ (278 aa)). PXXP repeat units follow at residues 856-859 (PRQP), 889-892 (PGGP), 930-933 (PGNP), and 948-951 (PGSP). Positions 856–951 (PRQPNPDWRY…PDKFIIPGSP (96 aa)) are 4 X 4 AA repeats of P-X-X-P. The tract at residues 885-1007 (LRAGPGGPDQ…GNSTTDNSDQ (123 aa)) is disordered. Positions 966–980 (DKSDFITFGKKEETK) are enriched in basic and acidic residues.

The protein localises to the cell membrane. Functionally, potential calcium-dependent cell-adhesion protein. May be involved in the establishment and maintenance of specific neuronal connections in the brain. The protein is Protocadherin alpha-C2 (PCDHAC2) of Pan troglodytes (Chimpanzee).